Here is a 361-residue protein sequence, read N- to C-terminus: Phospho-N-acetylmuramoyl-pentapeptide-transferase (361 aa).

The next 10 membrane-spanning stretches (helical) occupy residues Gly-27–Leu-47, Thr-72–Ala-92, Val-99–Leu-119, Ala-139–Tyr-159, Ala-169–Gly-189, Gly-200–Val-220, Leu-240–Pro-260, Ile-264–Ala-284, Ile-289–Val-309, and Gln-338–Leu-358.

This sequence belongs to the glycosyltransferase 4 family. MraY subfamily. It depends on Mg(2+) as a cofactor.

The protein localises to the cell inner membrane. It catalyses the reaction UDP-N-acetyl-alpha-D-muramoyl-L-alanyl-gamma-D-glutamyl-meso-2,6-diaminopimeloyl-D-alanyl-D-alanine + di-trans,octa-cis-undecaprenyl phosphate = di-trans,octa-cis-undecaprenyl diphospho-N-acetyl-alpha-D-muramoyl-L-alanyl-D-glutamyl-meso-2,6-diaminopimeloyl-D-alanyl-D-alanine + UMP. It functions in the pathway cell wall biogenesis; peptidoglycan biosynthesis. Its function is as follows. Catalyzes the initial step of the lipid cycle reactions in the biosynthesis of the cell wall peptidoglycan: transfers peptidoglycan precursor phospho-MurNAc-pentapeptide from UDP-MurNAc-pentapeptide onto the lipid carrier undecaprenyl phosphate, yielding undecaprenyl-pyrophosphoryl-MurNAc-pentapeptide, known as lipid I. The polypeptide is Phospho-N-acetylmuramoyl-pentapeptide-transferase (Methylobacterium sp. (strain 4-46)).